A 231-amino-acid chain; its full sequence is Androgen-dependent TFPI-regulating protein (231 aa).

Residues 1–7 (MTRTTTC) are Cytoplasmic-facing. Residues 8-28 (VYHFLVWNWYIFLNYYIPLIG) form a helical membrane-spanning segment. The Extracellular segment spans residues 29–45 (KDDEKLKEFHDGGRSKY). A helical membrane pass occupies residues 46–66 (LTLLNLLLQAIFFGVACLDDV). Topologically, residues 67-85 (LKRIIGRKDIKFITSTRDL) are cytoplasmic. A helical transmembrane segment spans residues 86-106 (LFSTLVFPISTFIFLVFWTLF). At 107 to 123 (YYDRSLIYPKGLDDYFP) the chain is on the extracellular side. The chain crosses the membrane as a helical span at residues 124-144 (AWLNHAMHTYILLFVLVETIL). The Cytoplasmic portion of the chain corresponds to 145–154 (RPHHYPSKKL). The chain crosses the membrane as a helical span at residues 155–172 (GLALLGACNLAYITRVLW). Over 173-190 (RYSQTGNWVYPVFASLNP) the chain is Extracellular. The helical transmembrane segment at 191–211 (LGIIIFFLVCYILNASIYLVG) threads the bilayer. Residues 212–231 (EKINHWKWGATVKPLMKKKK) are Cytoplasmic-facing.

It belongs to the AIG1 family. As to expression, highly expressed in flank organs and weakly in testis and earlobes.

It is found in the cell membrane. The enzyme catalyses 9-hexadecanoyloxy-octadecanoate + H2O = 9-hydroxy-octadecanoate + hexadecanoate + H(+). The catalysed reaction is 12-hexadecanoyloxy-octadecanoate + H2O = 12-hydroxyoctadecanoate + hexadecanoate + H(+). It catalyses the reaction 9-(9Z-hexadecenoyloxy)-octadecanoate + H2O = (9Z)-hexadecenoate + 9-hydroxy-octadecanoate + H(+). It carries out the reaction 12-(9Z-hexadecenoyloxy)-octadecanoate + H2O = 12-hydroxyoctadecanoate + (9Z)-hexadecenoate + H(+). The enzyme catalyses 13-(9Z-hexadecenoyloxy)-octadecanoate + H2O = 13-hydroxy-octadecanoate + (9Z)-hexadecenoate + H(+). The catalysed reaction is 9-octadecanoyloxy-octadecanoate + H2O = 9-hydroxy-octadecanoate + octadecanoate + H(+). It catalyses the reaction 12-octadecanoyloxy-octadecanoate + H2O = 12-hydroxyoctadecanoate + octadecanoate + H(+). It carries out the reaction 13-octadecanoyloxy-octadecanoate + H2O = 13-hydroxy-octadecanoate + octadecanoate + H(+). The enzyme catalyses 9-(9Z-octadecenoyloxy)-octadecanoate + H2O = 9-hydroxy-octadecanoate + (9Z)-octadecenoate + H(+). The catalysed reaction is 12-(9Z-octadecenoyloxy)-octadecanoate + H2O = 12-hydroxyoctadecanoate + (9Z)-octadecenoate + H(+). It catalyses the reaction 13-(9Z-octadecenoyloxy)-octadecanoate + H2O = 13-hydroxy-octadecanoate + (9Z)-octadecenoate + H(+). It carries out the reaction 5-(9Z-octadecenoyloxy)-octadecanoate + H2O = 5-hydroxy-octadecanoate + (9Z)-octadecenoate + H(+). Its function is as follows. Hydrolyzes bioactive fatty-acid esters of hydroxy-fatty acids (FAHFAs), but not other major classes of lipids. Shows a preference for FAHFAs with branching distal from the carboxylate head group of the lipids. Regulates the expression and the cell-associated anticoagulant activity of the inhibitor TFPI in endothelial cells (in vitro). This chain is Androgen-dependent TFPI-regulating protein (ADTRP), found in Mesocricetus auratus (Golden hamster).